Reading from the N-terminus, the 457-residue chain is Putative purine-cytosine permease YxlA (457 aa).

Transmembrane regions (helical) follow at residues 24 to 44, 50 to 70, 90 to 110, 127 to 147, 164 to 184, 192 to 212, 228 to 248, 264 to 284, 316 to 336, 341 to 361, 392 to 412, and 420 to 440; these read FPVW…TIPV, LFWS…FMAS, FGVI…LGFF, IPGS…TIFG, AVFF…GSWI, IFLV…PYVA, FWYS…LGAL, IVQL…FGQM, IIMI…GQSN, FLNF…INLV, IAFV…FYIG, and GGDI…YVLM.

It belongs to the purine-cytosine permease (2.A.39) family.

The protein localises to the cell membrane. The chain is Putative purine-cytosine permease YxlA (yxlA) from Bacillus subtilis (strain 168).